A 197-amino-acid chain; its full sequence is Shikimate kinase (197 aa).

ATP is bound at residue Gly-14–Thr-19. Residue Ser-18 participates in Mg(2+) binding. 3 residues coordinate substrate: Asp-36, Arg-60, and Gly-82. Arg-120 contacts ATP. Residue Arg-147 participates in substrate binding.

The protein belongs to the shikimate kinase family. As to quaternary structure, monomer. Mg(2+) serves as cofactor.

It is found in the cytoplasm. It catalyses the reaction shikimate + ATP = 3-phosphoshikimate + ADP + H(+). The protein operates within metabolic intermediate biosynthesis; chorismate biosynthesis; chorismate from D-erythrose 4-phosphate and phosphoenolpyruvate: step 5/7. Functionally, catalyzes the specific phosphorylation of the 3-hydroxyl group of shikimic acid using ATP as a cosubstrate. The protein is Shikimate kinase of Prosthecochloris aestuarii (strain DSM 271 / SK 413).